We begin with the raw amino-acid sequence, 261 residues long: uncharacterized protein (261 aa).

A compositionally biased stretch (polar residues) spans 20–34; that stretch reads TMSTPFLESDNSNTQ. A disordered region spans residues 20-55; that stretch reads TMSTPFLESDNSNTQSISGRIGSNNNSNSKNSGGIG. Residues 35 to 51 show a composition bias toward low complexity; the sequence is SISGRIGSNNNSNSKNS. The next 3 helical transmembrane spans lie at 113–133, 183–200, and 204–226; these read LFSGLFGGGFILTFILCILLL, LIFWITLYGTPIFWILFF, and IISLQFAWILIPIIALSLNMANV.

This sequence belongs to the TVP23 family.

The protein resides in the membrane. This is an uncharacterized protein from Dictyostelium discoideum (Social amoeba).